A 101-amino-acid chain; its full sequence is NAD(P)H-quinone oxidoreductase subunit 4L, chloroplastic (101 aa).

A run of 3 helical transmembrane segments spans residues 2–22 (MLEH…YGLI), 32–52 (MCLE…SDLF), and 61–81 (IFSI…LAIV).

This sequence belongs to the complex I subunit 4L family. In terms of assembly, NDH is composed of at least 16 different subunits, 5 of which are encoded in the nucleus.

Its subcellular location is the plastid. The protein localises to the chloroplast thylakoid membrane. The catalysed reaction is a plastoquinone + NADH + (n+1) H(+)(in) = a plastoquinol + NAD(+) + n H(+)(out). It catalyses the reaction a plastoquinone + NADPH + (n+1) H(+)(in) = a plastoquinol + NADP(+) + n H(+)(out). In terms of biological role, NDH shuttles electrons from NAD(P)H:plastoquinone, via FMN and iron-sulfur (Fe-S) centers, to quinones in the photosynthetic chain and possibly in a chloroplast respiratory chain. The immediate electron acceptor for the enzyme in this species is believed to be plastoquinone. Couples the redox reaction to proton translocation, and thus conserves the redox energy in a proton gradient. This chain is NAD(P)H-quinone oxidoreductase subunit 4L, chloroplastic, found in Nandina domestica (Heavenly bamboo).